The following is a 166-amino-acid chain: Small ribosomal subunit protein uS4 (166 aa).

In terms of domain architecture, S4 RNA-binding spans 102–164 (RRLQTIVWRK…HPSCLEVEKE (63 aa)).

It belongs to the universal ribosomal protein uS4 family. In terms of assembly, part of the 30S ribosomal subunit. Contacts protein S5. The interaction surface between S4 and S5 is involved in control of translational fidelity.

Functionally, one of the primary rRNA binding proteins, it binds directly to 16S rRNA where it nucleates assembly of the body of the 30S subunit. With S5 and S12 plays an important role in translational accuracy. This chain is Small ribosomal subunit protein uS4, found in Korarchaeum cryptofilum (strain OPF8).